The primary structure comprises 208 residues: Uridine kinase (208 aa).

11–18 (GGSGSGKT) contacts ATP.

This sequence belongs to the uridine kinase family.

It is found in the cytoplasm. The enzyme catalyses uridine + ATP = UMP + ADP + H(+). It carries out the reaction cytidine + ATP = CMP + ADP + H(+). It participates in pyrimidine metabolism; CTP biosynthesis via salvage pathway; CTP from cytidine: step 1/3. The protein operates within pyrimidine metabolism; UMP biosynthesis via salvage pathway; UMP from uridine: step 1/1. This Staphylococcus carnosus (strain TM300) protein is Uridine kinase.